The sequence spans 451 residues: MTRKLFGTDGIRGTANTDPMTAEMAMKLGMAAGRHFTRGDHRHVVVIGKDTRLSGYLLEPALTAGFISVGMDVVLLGPLPTPAVALLTRSMRADLGVMISASHNPYEDNGIKLFGPDGFKLSDEDELTIEASMSNGLESCRVGSDHLGRAKRLDDAAGRYIEYAKYTFPRGLRLDGLKIVVDCANGAAYKVAPTVLWELGAEVIPVAVNPDGFNINKNCGSLHTETMREQVVAHGAHLGIALDGDADRVVLCDELGHMIDGDQLMALIGDLWHRSGQLKGGGIVATVMSNLGLERFLDQRGLKTIRTAVGDRYVLEHMRRDGFNVGGEQSGHIILSDHSTTGDGLVAGLQVLAALVQSGKPASEMLRLFTPLPQVLKNVRVAKGSVAEVLAAPAVEAAIRDAEAKLAGQGRLLIRKSGTEPLIRVMAEGEDEGLVEASVDAIVETIRRAAG.

S102 acts as the Phosphoserine intermediate in catalysis. Mg(2+)-binding residues include S102, D243, D245, and D247. S102 is subject to Phosphoserine.

Belongs to the phosphohexose mutase family. Requires Mg(2+) as cofactor. In terms of processing, activated by phosphorylation.

The catalysed reaction is alpha-D-glucosamine 1-phosphate = D-glucosamine 6-phosphate. Functionally, catalyzes the conversion of glucosamine-6-phosphate to glucosamine-1-phosphate. The protein is Phosphoglucosamine mutase of Paramagnetospirillum magneticum (strain ATCC 700264 / AMB-1) (Magnetospirillum magneticum).